The following is a 589-amino-acid chain: Parathyroid hormone/parathyroid hormone-related peptide receptor (589 aa).

Residues 1–28 (MGAARIAPGLALLLCCPVLSSAYALVDA) form the signal peptide. The Extracellular portion of the chain corresponds to 29 to 188 (DDVMTKEEQI…REREVFDRLG (160 aa)). 3 disulfides stabilise this stretch: Cys-48-Cys-117, Cys-108-Cys-148, and Cys-131-Cys-170. Residues 64–105 (ESDKGWASASTSGKPKKEKPSGKLHPESEEDKEVPTGSRPRG) form a disordered region. Over residues 81–90 (EKPSGKLHPE) the composition is skewed to basic and acidic residues. 4 N-linked (GlcNAc...) asparagine glycosylation sites follow: Asn-151, Asn-161, Asn-166, and Asn-176. A helical membrane pass occupies residues 189 to 209 (MIYTVGYSVSLASLTVAVLIL). Residues 210 to 223 (AYFRRLHCTRNYIH) are Cytoplasmic-facing. The helical transmembrane segment at 224–244 (MHLFLSFMLRAVSIFVKDAVL) threads the bilayer. Topologically, residues 245–294 (YSGTALDEAERLTEEELRAIAQAPPPPAAAAGYVGCRVAVTFFLYFLATN) are extracellular. The chain crosses the membrane as a helical span at residues 295-315 (YYWILVEGLYLHSLIFMAFFS). Residues 316 to 318 (EKK) are Cytoplasmic-facing. Residues 319 to 339 (YLWGFTVFGWGLPAIFVAVWV) traverse the membrane as a helical segment. Residues 340 to 360 (SVRATLANTGCWDLSSGNKKW) lie on the Extracellular side of the membrane. Residues 361–381 (IIQVPILASIVLNFILFINIV) traverse the membrane as a helical segment. Topologically, residues 382–404 (RVLATKLRETNAGRCDTRQQYRK) are cytoplasmic. The chain crosses the membrane as a helical span at residues 405–425 (LLKSTLVLMPLFGVHYIVFMA). At 426 to 439 (TPYTEVSGTLWQVQ) the chain is on the extracellular side. The chain crosses the membrane as a helical span at residues 440–460 (MHYEMLFNSFQGFFVAIIYCF). At 461–589 (CNGEVQAEIK…LLQEEWETVM (129 aa)) the chain is on the cytoplasmic side. Positions 473-476 (WSRW) match the Important for interaction with G proteins motif. Residues 524–549 (AATTNGHPPLPGHTKSGSPALQATPP) are disordered. A Phosphothreonine modification is found at Thr-547.

The protein belongs to the G-protein coupled receptor 2 family. Homodimer in the absence of bound ligand. Peptide hormone binding leads to dissociation of the homodimer. Post-translationally, N-glycosylated.

Its subcellular location is the cell membrane. Its function is as follows. G-protein-coupled receptor for parathyroid hormone (PTH) and for parathyroid hormone-related peptide (PTHLH). Ligand binding causes a conformation change that triggers signaling via guanine nucleotide-binding proteins (G proteins) and modulates the activity of downstream effectors, such as adenylate cyclase (cAMP). PTH1R is coupled to G(s) G alpha proteins and mediates activation of adenylate cyclase activity. PTHLH dissociates from PTH1R more rapidly than PTH; as consequence, the cAMP response induced by PTHLH decays faster than the response induced by PTH. This chain is Parathyroid hormone/parathyroid hormone-related peptide receptor (PTH1R), found in Bos taurus (Bovine).